Here is a 602-residue protein sequence, read N- to C-terminus: Histone-arginine methyltransferase CARM1 (602 aa).

Positions 117 to 424 (AVQYFQFYGY…KKQSYDISIV (308 aa)) constitute an SAM-dependent MTase PRMT-type domain. S-adenosyl-L-methionine contacts are provided by glutamine 130, arginine 139, glycine 163, glutamate 185, glutamate 214, and serine 242. Residues 470 to 602 (TGGAYTMNTG…ITTNTMHYGS (133 aa)) are transactivation domain.

Belongs to the class I-like SAM-binding methyltransferase superfamily. Protein arginine N-methyltransferase family. In terms of assembly, homodimer.

Its subcellular location is the nucleus. It is found in the cytoplasm. The protein resides in the chromosome. The enzyme catalyses L-arginyl-[protein] + 2 S-adenosyl-L-methionine = N(omega),N(omega)-dimethyl-L-arginyl-[protein] + 2 S-adenosyl-L-homocysteine + 2 H(+). Functionally, methylates (mono- and asymmetric dimethylation) the guanidino nitrogens of arginyl residues in several proteins involved in DNA packaging, transcription regulation, pre-mRNA splicing, and mRNA stability. Recruited to promoters upon gene activation together with histone acetyltransferases from EP300/P300 and p160 families, methylates histone H3 at 'Arg-17' (H3R17me) and activates transcription via chromatin remodeling. This chain is Histone-arginine methyltransferase CARM1 (carm1), found in Xenopus laevis (African clawed frog).